We begin with the raw amino-acid sequence, 72 residues long: U1-sicaritoxin-Sdo1a (72 aa).

The first 24 residues, Met1–Ala24, serve as a signal peptide directing secretion. The propeptide occupies Glu25–Met41. 3 disulfide bridges follow: Cys43-Cys61, Cys50-Cys64, and Cys60-Cys69.

As to expression, expressed by the venom gland.

It localises to the secreted. This Hexophthalma dolichocephala (Afrotropical spider) protein is U1-sicaritoxin-Sdo1a.